A 449-amino-acid chain; its full sequence is Glucose-6-phosphate isomerase (449 aa).

E291 acts as the Proton donor in catalysis. Catalysis depends on residues H312 and K426.

It belongs to the GPI family.

The protein localises to the cytoplasm. It carries out the reaction alpha-D-glucose 6-phosphate = beta-D-fructose 6-phosphate. It functions in the pathway carbohydrate biosynthesis; gluconeogenesis. It participates in carbohydrate degradation; glycolysis; D-glyceraldehyde 3-phosphate and glycerone phosphate from D-glucose: step 2/4. Functionally, catalyzes the reversible isomerization of glucose-6-phosphate to fructose-6-phosphate. This is Glucose-6-phosphate isomerase from Pediococcus pentosaceus (strain ATCC 25745 / CCUG 21536 / LMG 10740 / 183-1w).